Consider the following 330-residue polypeptide: Aspartate--ammonia ligase (330 aa).

This sequence belongs to the class-II aminoacyl-tRNA synthetase family. AsnA subfamily.

The protein localises to the cytoplasm. The enzyme catalyses L-aspartate + NH4(+) + ATP = L-asparagine + AMP + diphosphate + H(+). Its pathway is amino-acid biosynthesis; L-asparagine biosynthesis; L-asparagine from L-aspartate (ammonia route): step 1/1. The polypeptide is Aspartate--ammonia ligase (Glaesserella parasuis serovar 5 (strain SH0165) (Haemophilus parasuis)).